The primary structure comprises 238 residues: 1-(5-phosphoribosyl)-5-[(5-phosphoribosylamino)methylideneamino] imidazole-4-carboxamide isomerase (238 aa).

The active-site Proton acceptor is the D8. The active-site Proton donor is the D129.

This sequence belongs to the HisA/HisF family.

It localises to the cytoplasm. The catalysed reaction is 1-(5-phospho-beta-D-ribosyl)-5-[(5-phospho-beta-D-ribosylamino)methylideneamino]imidazole-4-carboxamide = 5-[(5-phospho-1-deoxy-D-ribulos-1-ylimino)methylamino]-1-(5-phospho-beta-D-ribosyl)imidazole-4-carboxamide. The protein operates within amino-acid biosynthesis; L-histidine biosynthesis; L-histidine from 5-phospho-alpha-D-ribose 1-diphosphate: step 4/9. The chain is 1-(5-phosphoribosyl)-5-[(5-phosphoribosylamino)methylideneamino] imidazole-4-carboxamide isomerase from Lacticaseibacillus paracasei (strain ATCC 334 / BCRC 17002 / CCUG 31169 / CIP 107868 / KCTC 3260 / NRRL B-441) (Lactobacillus paracasei).